The following is a 423-amino-acid chain: UDP-N-acetylgalactosamine-undecaprenyl-phosphate N-acetylgalactosaminephosphotransferase (423 aa).

Topologically, residues 1–13 (MSYQRRHSRWYER) are extracellular. A helical transmembrane segment spans residues 14–34 (VLFSPPSLFFLGAMLAVCLPA). The Cytoplasmic segment spans residues 35–47 (LERWGWGFWEYFD). A helical membrane pass occupies residues 48–68 (AVRVNTLGGAFVAFLLTGIVL). Over 69-79 (YRFLRYPGASP) the chain is Extracellular. A helical membrane pass occupies residues 80 to 100 (VAYMIPTVTTLYGSLVGALFF). The Cytoplasmic portion of the chain corresponds to 101–107 (LRLPYSR). The chain crosses the membrane as a helical span at residues 108–128 (QVLFESYVVALLCCWVVYFIG). At 129-239 (RRYRTPKYAL…IYAFIKRGMD (111 aa)) the chain is on the extracellular side. The helical transmembrane segment at 240 to 260 (ILAAVIAIPLFSPLMLATAVL) threads the bilayer. Topologically, residues 261 to 423 (IKLESPGPVM…RTILTGFGAR (163 aa)) are cytoplasmic.

This sequence belongs to the bacterial sugar transferase family.

It localises to the membrane. It catalyses the reaction di-trans,octa-cis-undecaprenyl phosphate + UDP-N-acetyl-alpha-D-galactosamine = N-acetyl-alpha-D-galactosaminyl-di-trans,octa-cis-undecaprenyl diphosphate + UMP. It functions in the pathway bacterial outer membrane biogenesis; LPS O-antigen biosynthesis. Transfers N-acetyl-galactosamine (GalNAc) to undecaprenyl phosphate, a step in the assembly of the repeating-unit of the O-antigen. Shows no activity with UDP-N-acetyl-alpha-D-glucosamine. The sequence is that of UDP-N-acetylgalactosamine-undecaprenyl-phosphate N-acetylgalactosaminephosphotransferase (wecA) from Aeromonas hydrophila.